The sequence spans 710 residues: Cyclin-dependent kinase G-2 (710 aa).

A disordered region spans residues 1–350; sequence MAAGRHGGYR…ETPEPVKPPH (350 aa). Residues 8–30 show a composition bias toward basic and acidic residues; it reads GYRDYEARERELDAEASRRSKEQ. Over residues 31–40 the composition is skewed to basic residues; it reads QHHHHPSGRH. Positions 41–64 are enriched in basic and acidic residues; it reads QRGDSDPRCEADRRRDGGRSRGGR. Over residues 124-133 the composition is skewed to low complexity; sequence SVVAASASSP. Residues 144-163 show a composition bias toward basic and acidic residues; the sequence is WDRDSPKPMHSDVAKGKKAV. Positions 170 to 182 are enriched in pro residues; it reads LPLPPPPPLPPQD. 2 stretches are compositionally biased toward basic and acidic residues: residues 183–195 and 209–218; these read HIPE…KSPM and LQEHAESRVM. The segment covering 299 to 308 has biased composition (acidic residues); the sequence is DENEDLEVDK. Positions 335-344 are enriched in basic and acidic residues; it reads YEVRRSETPE. A Protein kinase domain is found at 365-656; that stretch reads FERLNKINEG…ADAALQHEWF (292 aa). ATP-binding positions include 371–379 and Lys-394; that span reads INEGTYGVV. Phosphothreonine is present on Thr-375. Tyr-376 is subject to Phosphotyrosine. Asp-489 functions as the Proton acceptor in the catalytic mechanism. The residue at position 516 (Ser-516) is a Phosphoserine. Thr-522 carries the phosphothreonine modification.

This sequence belongs to the protein kinase superfamily. CMGC Ser/Thr protein kinase family. CDC2/CDKX subfamily.

It carries out the reaction L-seryl-[protein] + ATP = O-phospho-L-seryl-[protein] + ADP + H(+). The enzyme catalyses L-threonyl-[protein] + ATP = O-phospho-L-threonyl-[protein] + ADP + H(+). The catalysed reaction is [DNA-directed RNA polymerase] + ATP = phospho-[DNA-directed RNA polymerase] + ADP + H(+). This chain is Cyclin-dependent kinase G-2 (CDKG-2), found in Oryza sativa subsp. indica (Rice).